A 690-amino-acid chain; its full sequence is Molting protein mlt-10 (690 aa).

Residues 1–18 form the signal peptide; it reads MRNLNLILFTALAAVTYA. N-linked (GlcNAc...) asparagine glycosylation is found at Asn42 and Asn204. The stretch at 219–285 forms a coiled coil; that stretch reads IKKLGEEAKR…MRKKEADEIR (67 aa). Asn305 and Asn415 each carry an N-linked (GlcNAc...) asparagine glycan. The next 5 membrane-spanning stretches (helical) occupy residues 514 to 534, 544 to 564, 579 to 599, 618 to 638, and 643 to 663; these read PFILTPLTFASAPLSNTFIVL, LSPAVLGPIILSPWVFVPLIL, FSPIILSPLVLHPLILVPGVF, VFTPLILSPFALNPLILTPMV, and ILSPFVLSPIILSPQALFAVV.

The protein belongs to the mlt-10-like family. Expressed in the major body hypodermal syncytium (Hyp7), the dorsal and ventral ridges of the hypodermis, hypodermal cells in the head and tail, and the pharyngeal myoepithelium, but not the lateral seam cells.

The protein resides in the membrane. It localises to the secreted. Functionally, required for the efficient removal of larval cuticles during the molting cycle as well as the synthesis of new cuticles. This is Molting protein mlt-10 from Caenorhabditis elegans.